The primary structure comprises 647 residues: DNA mismatch repair protein MutL (647 aa).

The protein belongs to the DNA mismatch repair MutL/HexB family.

Its function is as follows. This protein is involved in the repair of mismatches in DNA. It is required for dam-dependent methyl-directed DNA mismatch repair. May act as a 'molecular matchmaker', a protein that promotes the formation of a stable complex between two or more DNA-binding proteins in an ATP-dependent manner without itself being part of a final effector complex. This chain is DNA mismatch repair protein MutL, found in Bacillus cereus (strain G9842).